The primary structure comprises 137 residues: Phosphoribosyl-AMP cyclohydrolase (137 aa).

Asp-83 serves as a coordination point for Mg(2+). Position 84 (Cys-84) interacts with Zn(2+). Mg(2+) is bound by residues Asp-85 and Asp-87. Positions 101 and 108 each coordinate Zn(2+).

It belongs to the PRA-CH family. Homodimer. Mg(2+) serves as cofactor. It depends on Zn(2+) as a cofactor.

It localises to the cytoplasm. The enzyme catalyses 1-(5-phospho-beta-D-ribosyl)-5'-AMP + H2O = 1-(5-phospho-beta-D-ribosyl)-5-[(5-phospho-beta-D-ribosylamino)methylideneamino]imidazole-4-carboxamide. It functions in the pathway amino-acid biosynthesis; L-histidine biosynthesis; L-histidine from 5-phospho-alpha-D-ribose 1-diphosphate: step 3/9. In terms of biological role, catalyzes the hydrolysis of the adenine ring of phosphoribosyl-AMP. The protein is Phosphoribosyl-AMP cyclohydrolase of Burkholderia mallei (strain ATCC 23344).